The following is a 201-amino-acid chain: Recombination protein RecR (201 aa).

A C4-type zinc finger spans residues 57-72 (CADCRTFTEQDVCNIC). The region spanning 81–176 (GQICVVESPA…EASRIAHGVP (96 aa)) is the Toprim domain.

This sequence belongs to the RecR family.

May play a role in DNA repair. It seems to be involved in an RecBC-independent recombinational process of DNA repair. It may act with RecF and RecO. The sequence is that of Recombination protein RecR from Salmonella agona (strain SL483).